The sequence spans 352 residues: Selenide, water dikinase (352 aa).

Cysteine 23 is an active-site residue. Residues lysine 26 and 54–56 (SRD) contribute to the ATP site. Aspartate 57 lines the Mg(2+) pocket. ATP-binding positions include aspartate 74, aspartate 97, and 145–147 (GHS). Residue aspartate 97 coordinates Mg(2+). A Mg(2+)-binding site is contributed by aspartate 233.

Belongs to the selenophosphate synthase 1 family. Class I subfamily. As to quaternary structure, homodimer. Requires Mg(2+) as cofactor.

It carries out the reaction hydrogenselenide + ATP + H2O = selenophosphate + AMP + phosphate + 2 H(+). In terms of biological role, synthesizes selenophosphate from selenide and ATP. In Shewanella putrefaciens (strain CN-32 / ATCC BAA-453), this protein is Selenide, water dikinase.